The primary structure comprises 403 residues: S-adenosylmethionine synthase (403 aa).

Residue His-17 coordinates ATP. A Mg(2+)-binding site is contributed by Asp-19. Glu-45 is a binding site for K(+). The L-methionine site is built by Glu-58 and Gln-104. Residues 104-114 form a flexible loop region; it reads QSPDIAQGVDT. ATP contacts are provided by residues 179–181, 250–251, Asp-259, 265–266, Ala-282, and Lys-286; these read DGK, KF, and RK. Asp-259 contributes to the L-methionine binding site. L-methionine is bound at residue Lys-290.

The protein belongs to the AdoMet synthase family. In terms of assembly, homotetramer; dimer of dimers. Mg(2+) serves as cofactor. K(+) is required as a cofactor.

It localises to the cytoplasm. It catalyses the reaction L-methionine + ATP + H2O = S-adenosyl-L-methionine + phosphate + diphosphate. Its pathway is amino-acid biosynthesis; S-adenosyl-L-methionine biosynthesis; S-adenosyl-L-methionine from L-methionine: step 1/1. Catalyzes the formation of S-adenosylmethionine (AdoMet) from methionine and ATP. The overall synthetic reaction is composed of two sequential steps, AdoMet formation and the subsequent tripolyphosphate hydrolysis which occurs prior to release of AdoMet from the enzyme. This Mycobacterium bovis (strain BCG / Pasteur 1173P2) protein is S-adenosylmethionine synthase.